Consider the following 196-residue polypeptide: Nucleoid occlusion factor SlmA (196 aa).

The HTH tetR-type domain occupies 7-68 (SNRREEILQA…GLIEFIEEAL (62 aa)). The segment at residues 31 to 50 (TTVKLAKQVGVSEAALYRHF) is a DNA-binding region (H-T-H motif). Residues 65–142 (EEALMSRINR…QLRQILRERK (78 aa)) adopt a coiled-coil conformation.

This sequence belongs to the nucleoid occlusion factor SlmA family. In terms of assembly, homodimer. Interacts with FtsZ.

It localises to the cytoplasm. It is found in the nucleoid. Functionally, required for nucleoid occlusion (NO) phenomenon, which prevents Z-ring formation and cell division over the nucleoid. Acts as a DNA-associated cell division inhibitor that binds simultaneously chromosomal DNA and FtsZ, and disrupts the assembly of FtsZ polymers. SlmA-DNA-binding sequences (SBS) are dispersed on non-Ter regions of the chromosome, preventing FtsZ polymerization at these regions. The protein is Nucleoid occlusion factor SlmA of Vibrio atlanticus (strain LGP32) (Vibrio splendidus (strain Mel32)).